The sequence spans 406 residues: Cysteine desulfurase (406 aa).

K226 bears the N6-(pyridoxal phosphate)lysine mark. The active-site Cysteine persulfide intermediate is C364.

Belongs to the class-V pyridoxal-phosphate-dependent aminotransferase family. Csd subfamily. As to quaternary structure, homodimer. Interacts with SufE and the SufBCD complex composed of SufB, SufC and SufD. The interaction with SufE is required to mediate the direct transfer of the sulfur atom from the S-sulfanylcysteine. The cofactor is pyridoxal 5'-phosphate.

It localises to the cytoplasm. It catalyses the reaction (sulfur carrier)-H + L-cysteine = (sulfur carrier)-SH + L-alanine. The enzyme catalyses L-selenocysteine + AH2 = hydrogenselenide + L-alanine + A + H(+). The protein operates within cofactor biosynthesis; iron-sulfur cluster biosynthesis. Functionally, cysteine desulfurases mobilize the sulfur from L-cysteine to yield L-alanine, an essential step in sulfur metabolism for biosynthesis of a variety of sulfur-containing biomolecules. Component of the suf operon, which is activated and required under specific conditions such as oxidative stress and iron limitation. Acts as a potent selenocysteine lyase in vitro, that mobilizes selenium from L-selenocysteine. Selenocysteine lyase activity is however unsure in vivo. This is Cysteine desulfurase from Escherichia coli (strain SE11).